Here is a 287-residue protein sequence, read N- to C-terminus: Inorganic pyrophosphatase (287 aa).

R79 lines the diphosphate pocket. Mg(2+)-binding residues include D116, D121, and D153.

This sequence belongs to the PPase family. As to quaternary structure, homodimer. The cofactor is Mg(2+).

It localises to the cytoplasm. It catalyses the reaction diphosphate + H2O = 2 phosphate + H(+). This is Inorganic pyrophosphatase (IPP1) from Kluyveromyces lactis (strain ATCC 8585 / CBS 2359 / DSM 70799 / NBRC 1267 / NRRL Y-1140 / WM37) (Yeast).